A 383-amino-acid polypeptide reads, in one-letter code: Cytochrome b (383 aa).

4 helical membrane-spanning segments follow: residues 34 to 54 (FGSL…FLMM), 78 to 99 (WLIR…FLHI), 114 to 134 (WNVG…GYVL), and 179 to 199 (FTAL…THLI). Residues His84 and His98 each contribute to the heme b site. The heme b site is built by His183 and His197. His202 serves as a coordination point for a ubiquinone. A run of 4 helical transmembrane segments spans residues 227-247 (MKDV…ALYL), 289-309 (LGGV…PFLH), 321-341 (LSQL…WIGG), and 348-368 (YILL…ILMP).

Belongs to the cytochrome b family. As to quaternary structure, the cytochrome bc1 complex contains 3 respiratory subunits (MT-CYB, CYC1 and UQCRFS1), 2 core proteins (UQCRC1 and UQCRC2) and probably 6 low-molecular weight proteins. It depends on heme b as a cofactor.

It localises to the mitochondrion inner membrane. In terms of biological role, component of the ubiquinol-cytochrome c reductase complex (complex III or cytochrome b-c1 complex) that is part of the mitochondrial respiratory chain. The b-c1 complex mediates electron transfer from ubiquinol to cytochrome c. Contributes to the generation of a proton gradient across the mitochondrial membrane that is then used for ATP synthesis. The sequence is that of Cytochrome b (MT-CYB) from Caiman crocodilus (Spectacled caiman).